Consider the following 485-residue polypeptide: Glutamyl-tRNA(Gln) amidotransferase subunit A (485 aa).

Catalysis depends on charge relay system residues lysine 79 and serine 154. Serine 178 (acyl-ester intermediate) is an active-site residue.

This sequence belongs to the amidase family. GatA subfamily. As to quaternary structure, heterotrimer of A, B and C subunits.

It carries out the reaction L-glutamyl-tRNA(Gln) + L-glutamine + ATP + H2O = L-glutaminyl-tRNA(Gln) + L-glutamate + ADP + phosphate + H(+). Allows the formation of correctly charged Gln-tRNA(Gln) through the transamidation of misacylated Glu-tRNA(Gln) in organisms which lack glutaminyl-tRNA synthetase. The reaction takes place in the presence of glutamine and ATP through an activated gamma-phospho-Glu-tRNA(Gln). The chain is Glutamyl-tRNA(Gln) amidotransferase subunit A from Geobacillus stearothermophilus (Bacillus stearothermophilus).